A 135-amino-acid polypeptide reads, in one-letter code: Large ribosomal subunit protein uL16c (135 aa).

The protein belongs to the universal ribosomal protein uL16 family. As to quaternary structure, part of the 50S ribosomal subunit.

The protein localises to the plastid. The protein resides in the chloroplast. The chain is Large ribosomal subunit protein uL16c from Nandina domestica (Heavenly bamboo).